Here is a 499-residue protein sequence, read N- to C-terminus: Potassium voltage-gated channel subfamily A member 2 (499 aa).

Residues 1–27 (MTVATGEPADEAAALPGHPQDTYDPEA) form a disordered region. Positions 1-125 (MTVATGEPAD…YELGEEAMEM (125 aa)) are tetramerization domain. The Cytoplasmic segment spans residues 1 to 160 (MTVATGEPAD…LLFEYPESSG (160 aa)). A helical membrane pass occupies residues 161 to 182 (PARIIAIVSVMVILISIVSFCL). At 183–221 (ETLPIFRDENEDMHGGGVTFHTYSNSTIGYQQSTSFTDP) the chain is on the extracellular side. An N-linked (GlcNAc...) asparagine glycan is attached at N207. Residues 222–243 (FFIVETLCIIWFSFEFLVRFFA) traverse the membrane as a helical segment. The S-palmitoyl cysteine moiety is linked to residue C244. The Cytoplasmic segment spans residues 244-254 (CPSKAGFFTNI). A helical membrane pass occupies residues 255–275 (MNIIDIVAIIPYFITLGTELA). Topologically, residues 276–289 (EKPEDAQQGQQAMS) are extracellular. The chain crosses the membrane as a helical; Voltage-sensor span at residues 290-310 (LAILRVIRLVRVFRIFKLSRH). Residues 311-325 (SKGLQILGQTLKASM) lie on the Cytoplasmic side of the membrane. The segment at 312–325 (KGLQILGQTLKASM) is S4-S5 linker. Residues 326 to 347 (RELGLLIFFLFIGVILFSSAVY) form a helical membrane-spanning segment. Topologically, residues 348 to 361 (FAEADERESQFPSI) are extracellular. Residues 362-373 (PDAFWWAVVSMT) constitute an intramembrane region (helical). The Selectivity filter motif lies at 374–379 (TVGYGD). Residues 374-381 (TVGYGDMV) lie within the membrane without spanning it. The Extracellular segment spans residues 382-388 (PTTIGGK). The helical transmembrane segment at 389-417 (IVGSLCAIAGVLTIALPVPVIVSNFNYFY) threads the bilayer. Residues 418-499 (HRETEGEEQA…VNITKMLTDV (82 aa)) lie on the Cytoplasmic side of the membrane. Y429 bears the Phosphotyrosine mark. Residues S434, S440, S441, and S449 each carry the phosphoserine modification. Y458 bears the Phosphotyrosine mark. Residue S468 is modified to Phosphoserine. Positions 497–499 (TDV) match the PDZ-binding motif.

This sequence belongs to the potassium channel family. A (Shaker) (TC 1.A.1.2) subfamily. Kv1.2/KCNA2 sub-subfamily. As to quaternary structure, homotetramer and heterotetramer with other channel-forming alpha subunits, such as KCNA1, KCNA4, KCNA5, KCNA6 and KCNA7. Channel activity is regulated by interaction with the beta subunits, including KCNAB1 and KCNAB2. Identified in a complex with KCNA1 and KCNAB2. Identified in a complex with KCNA5 and KCNAB1. Interacts with the beta subunit KCNAB1. Identified in a complex with KCNA4 and FYN. Interacts with PTK2B. Interacts (via C-terminus) with CTTN. Interacts (via N-terminal cytoplasmic domain) with RHOA (GTP-bound form); this regulates channel activity by reducing location at the cell surface in response to CHRM1 activation. Interacts with DRD2. Interacts with SIGMAR1; cocaine consumption leads to increased interaction. Interacts with ADAM22. Interacts with CNTNAP2. Interacts (via C-terminus) with the PDZ domains of DLG1, DLG2 and DLG4. Interacts with ADAM11. Interacts with LYNX1. In terms of processing, phosphorylated on tyrosine residues; phosphorylation increases in response to ischemia. Phosphorylated on tyrosine residues by activated PTK2B/PYK2. Phosphorylation on tyrosine residues suppresses ion channel activity. Phosphorylated on tyrosine residues in response to CHRM1 activation; this abolishes interaction with CTTN. This is probably due to endocytosis of the phosphorylated channel subunits. Phosphorylated on serine residues in response to increased cAMP levels; phosphorylation is apparently not catalyzed by PKA. N-glycosylated, with complex, sialylated N-glycans. As to expression, expressed in a wide variety of gastrointestinal smooth muscles. Not expressed in portal vein, renal artery, and uterus.

Its subcellular location is the cell membrane. It is found in the membrane. The protein localises to the cell projection. The protein resides in the axon. It localises to the synapse. Its subcellular location is the presynaptic cell membrane. It is found in the synaptosome. The protein localises to the endoplasmic reticulum membrane. The protein resides in the dendrite. It localises to the lamellipodium membrane. Its subcellular location is the cell junction. It is found in the paranodal septate junction. It carries out the reaction K(+)(in) = K(+)(out). With respect to regulation, inhibited by 4-aminopyridine (4-AP). Inhibited by dendrotoxin (DTX) and charybdotoxin (CTX), but not by tetraethylammonium (TEA). Inhibited by tityustoxin-K alpha (TsTX-Kalpha), a toxin that is highly specific for KCNA2. Inhibited by maurotoxin. Inhibited by kappaM conotoxins kappaM-RIIIJ and kappaM-RIIIK. Its function is as follows. Voltage-gated potassium channel that mediates transmembrane potassium transport in excitable membranes, primarily in the brain and the central nervous system, but also in the cardiovascular system. Prevents aberrant action potential firing and regulates neuronal output. Forms tetrameric potassium-selective channels through which potassium ions pass in accordance with their electrochemical gradient. The channel alternates between opened and closed conformations in response to the voltage difference across the membrane. Can form functional homotetrameric channels and heterotetrameric channels that contain variable proportions of KCNA1, KCNA2, KCNA4, KCNA5, KCNA6, KCNA7, and possibly other family members as well; channel properties depend on the type of alpha subunits that are part of the channel. Channel properties are modulated by cytoplasmic beta subunits that regulate the subcellular location of the alpha subunits and promote rapid inactivation of delayed rectifier potassium channels. In vivo, membranes probably contain a mixture of heteromeric potassium channel complexes, making it difficult to assign currents observed in intact tissues to any particular potassium channel family member. Homotetrameric KCNA2 forms a delayed-rectifier potassium channel that opens in response to membrane depolarization, followed by slow spontaneous channel closure. In contrast, a heteromultimer formed by KCNA2 and KCNA4 shows rapid inactivation. Regulates neuronal excitability and plays a role as pacemaker in the regulation of neuronal action potentials. KCNA2-containing channels play a presynaptic role and prevent hyperexcitability and aberrant action potential firing. Response to toxins that are selective for KCNA2-containing potassium channels suggests that in Purkinje cells, dendritic subthreshold KCNA2-containing potassium channels prevent random spontaneous calcium spikes, suppressing dendritic hyperexcitability without hindering the generation of somatic action potentials, and thereby play an important role in motor coordination. Plays a role in the induction of long-term potentiation of neuron excitability in the CA3 layer of the hippocampus. May function as down-stream effector for G protein-coupled receptors and inhibit GABAergic inputs to basolateral amygdala neurons. May contribute to the regulation of neurotransmitter release, such as gamma-aminobutyric acid (GABA). Contributes to the regulation of the axonal release of the neurotransmitter dopamine. Reduced KCNA2 expression plays a role in the perception of neuropathic pain after peripheral nerve injury, but not acute pain. Plays a role in the regulation of the time spent in non-rapid eye movement (NREM) sleep. The protein is Potassium voltage-gated channel subfamily A member 2 (KCNA2) of Canis lupus familiaris (Dog).